Reading from the N-terminus, the 344-residue chain is Mitogen-activated protein kinase mpkC (344 aa).

Positions 19 to 298 (YANVQPVGLG…AETALQHPYL (280 aa)) constitute a Protein kinase domain. ATP is bound by residues 25-33 (VGLGAFGLV) and Lys48. The Proton acceptor role is filled by Asp140. Residue Thr170 is modified to Phosphothreonine. Positions 170-172 (TGY) match the TXY motif. Residue Tyr172 is modified to Phosphotyrosine.

It belongs to the protein kinase superfamily. Ser/Thr protein kinase family. MAP kinase subfamily. HOG1 sub-subfamily. It depends on Mg(2+) as a cofactor. In terms of processing, dually phosphorylated on Thr-170 and Tyr-172, which activates the enzyme.

The enzyme catalyses L-seryl-[protein] + ATP = O-phospho-L-seryl-[protein] + ADP + H(+). It catalyses the reaction L-threonyl-[protein] + ATP = O-phospho-L-threonyl-[protein] + ADP + H(+). Activated by tyrosine and threonine phosphorylation. In terms of biological role, mitogen-activated protein kinase required for growth on media where sorbitol or mannitol is the sole carbon source. The polypeptide is Mitogen-activated protein kinase mpkC (mpkC) (Aspergillus oryzae (strain ATCC 42149 / RIB 40) (Yellow koji mold)).